A 321-amino-acid chain; its full sequence is Pirin-like protein 2 (321 aa).

The Fe cation site is built by His88, His90, His132, and Glu134.

The protein belongs to the pirin family. As to quaternary structure, interacts with RD21A, RD21B and XCP2.

It localises to the cytoplasm. It is found in the cytosol. Its subcellular location is the nucleus. Its function is as follows. Involved in susceptibility to the bacterial plant pathogen Ralstonia solanacearum. Stabilizes the xylem cysteine protease XCP2 by blocking its autolysis. In Arabidopsis thaliana (Mouse-ear cress), this protein is Pirin-like protein 2.